The primary structure comprises 778 residues: Phosphoribosylformylglycinamidine synthase subunit PurL (778 aa).

H44 is an active-site residue. Residues Y47 and K86 each coordinate ATP. E88 is a Mg(2+) binding site. Substrate is bound by residues S89 to H92 and R111. Residue H90 is the Proton acceptor of the active site. Mg(2+) contacts are provided by D112 and D265. E309–Q311 provides a ligand contact to substrate. Residues T455–K474 are disordered. ATP contacts are provided by N518 and G555. Position 556 (N556) interacts with Mg(2+). S558 serves as a coordination point for substrate.

This sequence belongs to the FGAMS family. In terms of assembly, monomer. Part of the FGAM synthase complex composed of 1 PurL, 1 PurQ and 2 PurS subunits.

The protein localises to the cytoplasm. It carries out the reaction N(2)-formyl-N(1)-(5-phospho-beta-D-ribosyl)glycinamide + L-glutamine + ATP + H2O = 2-formamido-N(1)-(5-O-phospho-beta-D-ribosyl)acetamidine + L-glutamate + ADP + phosphate + H(+). Its pathway is purine metabolism; IMP biosynthesis via de novo pathway; 5-amino-1-(5-phospho-D-ribosyl)imidazole from N(2)-formyl-N(1)-(5-phospho-D-ribosyl)glycinamide: step 1/2. Part of the phosphoribosylformylglycinamidine synthase complex involved in the purines biosynthetic pathway. Catalyzes the ATP-dependent conversion of formylglycinamide ribonucleotide (FGAR) and glutamine to yield formylglycinamidine ribonucleotide (FGAM) and glutamate. The FGAM synthase complex is composed of three subunits. PurQ produces an ammonia molecule by converting glutamine to glutamate. PurL transfers the ammonia molecule to FGAR to form FGAM in an ATP-dependent manner. PurS interacts with PurQ and PurL and is thought to assist in the transfer of the ammonia molecule from PurQ to PurL. The polypeptide is Phosphoribosylformylglycinamidine synthase subunit PurL (Symbiobacterium thermophilum (strain DSM 24528 / JCM 14929 / IAM 14863 / T)).